The chain runs to 131 residues: Large ribosomal subunit protein bL12 (131 aa).

Belongs to the bacterial ribosomal protein bL12 family. In terms of assembly, homodimer. Part of the ribosomal stalk of the 50S ribosomal subunit. Forms a multimeric L10(L12)X complex, where L10 forms an elongated spine to which 2 to 4 L12 dimers bind in a sequential fashion. Binds GTP-bound translation factors.

Functionally, forms part of the ribosomal stalk which helps the ribosome interact with GTP-bound translation factors. Is thus essential for accurate translation. This chain is Large ribosomal subunit protein bL12, found in Prochlorococcus marinus (strain NATL1A).